A 616-amino-acid chain; its full sequence is DNA mismatch repair protein MutL (616 aa).

The protein belongs to the DNA mismatch repair MutL/HexB family.

In terms of biological role, this protein is involved in the repair of mismatches in DNA. It is required for dam-dependent methyl-directed DNA mismatch repair. May act as a 'molecular matchmaker', a protein that promotes the formation of a stable complex between two or more DNA-binding proteins in an ATP-dependent manner without itself being part of a final effector complex. This is DNA mismatch repair protein MutL from Syntrophus aciditrophicus (strain SB).